Here is a 502-residue protein sequence, read N- to C-terminus: Exodeoxyribonuclease 7 large subunit (502 aa).

Residues 474–495 (SAPSTTKKSAPKPAAPKAPKTP) show a composition bias toward low complexity. The segment at 474–502 (SAPSTTKKSAPKPAAPKAPKTPGEQGSLF) is disordered.

The protein belongs to the XseA family. Heterooligomer composed of large and small subunits.

Its subcellular location is the cytoplasm. The enzyme catalyses Exonucleolytic cleavage in either 5'- to 3'- or 3'- to 5'-direction to yield nucleoside 5'-phosphates.. Its function is as follows. Bidirectionally degrades single-stranded DNA into large acid-insoluble oligonucleotides, which are then degraded further into small acid-soluble oligonucleotides. The protein is Exodeoxyribonuclease 7 large subunit of Ruegeria sp. (strain TM1040) (Silicibacter sp.).